We begin with the raw amino-acid sequence, 108 residues long: Nitrite reductase (NADH) small subunit (108 aa).

It to B.subtilis NasE. As to quaternary structure, associates with NirB.

The protein localises to the cytoplasm. It catalyses the reaction NH4(+) + 3 NAD(+) + 2 H2O = nitrite + 3 NADH + 5 H(+). In terms of biological role, required for activity of the reductase. The polypeptide is Nitrite reductase (NADH) small subunit (nirD) (Escherichia coli O157:H7).